The chain runs to 75 residues: UPF0352 protein VV1_3121 (75 aa).

It belongs to the UPF0352 family.

This is UPF0352 protein VV1_3121 from Vibrio vulnificus (strain CMCP6).